The following is a 364-amino-acid chain: Triacylglycerol lipase (364 aa).

Residues Met1–Pro44 form the signal peptide. In terms of domain architecture, AB hydrolase-1 spans Pro54–Gly266. Position 61 (Leu61) interacts with substrate. Catalysis depends on Ser131, which acts as the Nucleophile. Gln132 contributes to the substrate binding site. Cysteines 234 and 314 form a disulfide. Residue Asp286 participates in Ca(2+) binding. Active-site charge relay system residues include Asp308 and His330. Residues Asp332, Gln336, and Val340 each coordinate Ca(2+).

This sequence belongs to the AB hydrolase superfamily. Pseudomonas lipase family. Monomer. Ca(2+) serves as cofactor.

It is found in the secreted. It carries out the reaction a triacylglycerol + H2O = a diacylglycerol + a fatty acid + H(+). Its activity is regulated as follows. Inhibited by RC-(Rp,Sp)- and SC-(Rp,Sp)-1,2-dioctylcarbamoylglycero-3-O-p-nitrophenyl octylphosphonate. Also inhibited by diethyl-p-nitrophenylphosphate (E600). Its function is as follows. Catalyzes the hydrolysis of triacylglycerol. It shows a preference for triacylglycerols with a chain length between 6 and 12 carbons. In Burkholderia cepacia (Pseudomonas cepacia), this protein is Triacylglycerol lipase.